A 137-amino-acid polypeptide reads, in one-letter code: Global transcriptional regulator Spx (137 aa).

A disulfide bridge connects residues Cys-10 and Cys-13.

It belongs to the ArsC family. Spx subfamily. Interacts with the C-terminal domain of the alpha subunit of the RNAP.

It localises to the cytoplasm. In terms of biological role, global transcriptional regulator that plays a key role in stress response and exerts either positive or negative regulation of genes. Acts by interacting with the C-terminal domain of the alpha subunit of the RNA polymerase (RNAP). This interaction can enhance binding of RNAP to the promoter region of target genes and stimulate their transcription, or block interaction of RNAP with activator. In Streptococcus mutans serotype c (strain ATCC 700610 / UA159), this protein is Global transcriptional regulator Spx.